Consider the following 78-residue polypeptide: RNA-binding protein KhpA (78 aa).

Residues 29-78 form the KH domain; that stretch reads TIIYELTVAKGDIGKIIGKEGRTIKAIRTLLVSVASRDNVKVSLEIMEER.

This sequence belongs to the KhpA RNA-binding protein family.

Its subcellular location is the cytoplasm. A probable RNA-binding protein. The chain is RNA-binding protein KhpA from Chlamydia trachomatis serovar D (strain ATCC VR-885 / DSM 19411 / UW-3/Cx).